The primary structure comprises 179 residues: uncharacterized protein (179 aa).

The next 4 membrane-spanning stretches (helical) occupy residues 9–31 (WILVILFATLLFFAFTGIFVSTL), 41–63 (AFLLGFLGALVFANKLLFGYGSF), 114–136 (AYYGIFTLMLIIMLLSKFDLLGA), and 146–168 (AFWGAAVITLFVFALEITANYLM).

It localises to the cell membrane. This is an uncharacterized protein from Aquifex aeolicus (strain VF5).